The following is a 940-amino-acid chain: Isoleucine--tRNA ligase (940 aa).

The 'HIGH' region motif lies at 58-68 (PYANGSIHIGH). Residue Glu-564 coordinates L-isoleucyl-5'-AMP. Positions 605–609 (KMSKS) match the 'KMSKS' region motif. Lys-608 is a binding site for ATP. Zn(2+)-binding residues include Cys-903, Cys-906, Cys-923, and Cys-926.

Belongs to the class-I aminoacyl-tRNA synthetase family. IleS type 1 subfamily. As to quaternary structure, monomer. Zn(2+) serves as cofactor.

Its subcellular location is the cytoplasm. The catalysed reaction is tRNA(Ile) + L-isoleucine + ATP = L-isoleucyl-tRNA(Ile) + AMP + diphosphate. Its function is as follows. Catalyzes the attachment of isoleucine to tRNA(Ile). As IleRS can inadvertently accommodate and process structurally similar amino acids such as valine, to avoid such errors it has two additional distinct tRNA(Ile)-dependent editing activities. One activity is designated as 'pretransfer' editing and involves the hydrolysis of activated Val-AMP. The other activity is designated 'posttransfer' editing and involves deacylation of mischarged Val-tRNA(Ile). The sequence is that of Isoleucine--tRNA ligase from Shewanella sp. (strain MR-4).